A 235-amino-acid polypeptide reads, in one-letter code: Sugar fermentation stimulation protein homolog (235 aa).

The protein belongs to the SfsA family.

This chain is Sugar fermentation stimulation protein homolog, found in Pseudomonas aeruginosa (strain ATCC 15692 / DSM 22644 / CIP 104116 / JCM 14847 / LMG 12228 / 1C / PRS 101 / PAO1).